Reading from the N-terminus, the 492-residue chain is Spindle assembly abnormal protein 6 (492 aa).

Residues 46 to 98 (SGEKELKFEISRSDDFEFLFSETLNNEKYQILARDHDLTVDFDAFPKVIIQHL) form the PISA domain. Residues 192–407 (KSADELASLR…KIAHYRAQRF (216 aa)) are a coiled coil.

In terms of assembly, nine homodimers form a cartwheel structure with an internal diameter of 23 nM and radial spokes connecting to the microtubule triplets. Interacts with sas-5.

It localises to the cytoplasm. The protein localises to the cytoskeleton. It is found in the microtubule organizing center. Its subcellular location is the centrosome. The protein resides in the centriole. Central scaffolding component of the centrioles ensuring their 9-fold symmetry. Required for centrosome biogenesis and duplication. This Caenorhabditis elegans protein is Spindle assembly abnormal protein 6.